We begin with the raw amino-acid sequence, 851 residues long: DNA mismatch repair protein MutS (851 aa).

An ATP-binding site is contributed by 614–621; that stretch reads GPNMGGKS.

This sequence belongs to the DNA mismatch repair MutS family.

This protein is involved in the repair of mismatches in DNA. It is possible that it carries out the mismatch recognition step. This protein has a weak ATPase activity. This chain is DNA mismatch repair protein MutS, found in Yersinia enterocolitica serotype O:8 / biotype 1B (strain NCTC 13174 / 8081).